Here is a 377-residue protein sequence, read N- to C-terminus: uncharacterized protein (377 aa).

A disordered region spans residues 1-25; that stretch reads MAQQTNVAGQKTEKQRKAPFRADHV. Residues 11-24 show a composition bias toward basic and acidic residues; sequence KTEKQRKAPFRADH.

It to B.subtilis YxjG.

This is an uncharacterized protein from Bacillus subtilis (strain 168).